The chain runs to 106 residues: Malonate decarboxylase acyl carrier protein (106 aa).

O-(phosphoribosyl dephospho-coenzyme A)serine is present on serine 28.

Belongs to the MdcC family. Covalently binds the prosthetic group of malonate decarboxylase.

The protein resides in the cytoplasm. Subunit of malonate decarboxylase, it is an acyl carrier protein to which acetyl and malonyl thioester residues are bound via a 2'-(5''-phosphoribosyl)-3'-dephospho-CoA prosthetic group and turn over during the catalytic mechanism. This is Malonate decarboxylase acyl carrier protein from Stenotrophomonas maltophilia (strain R551-3).